The chain runs to 380 residues: MSNTAGQVIRCRAAVAWEAGKPLVIEEVEVAPPQANEVRIKILFTSLCHTDVYFWEAKGQNPLFPRIYGHEAGGIVESVGEGVTDLKAGDHVLPVFTGECKDCAHCKSEESNMCDLLRINTDRGVMLSDGKSRFSIKGKPIYHFVGTSTFSEYTVVHVGCLAKINPSAPLDKVCLLSCGISTGLGATLNVAKPKKGSTVAVFGLGAVGLAAAEGARLSGASRIIGVDLHSDRFEEAKKFGVTEFVNPKAHEKPVQEVIAELTNRGVDRSIECTGSTEAMISAFECVHDGWGVAVLVGVPHKDAVFKTHPVNFLNERTLKGTFFGNYKTRTDIPSVVEKYMNKELELEKFITHKVPFSEINKAFEYMLKGEGLRCIIRMEE.

Zn(2+) is bound by residues Cys48, Thr50, His70, Cys100, Cys103, Cys106, Cys114, and Cys178. An alcohol contacts are provided by Thr50 and His70. Thr50 contacts NAD(+). Residues 203 to 208, Asp227, Arg232, Thr273, Val296, 296 to 298, Phe323, and Arg373 contribute to the NAD(+) site; these read GLGAVG and VGV.

It belongs to the zinc-containing alcohol dehydrogenase family. In terms of assembly, homodimer. The cofactor is Zn(2+).

It localises to the cytoplasm. The catalysed reaction is a primary alcohol + NAD(+) = an aldehyde + NADH + H(+). It carries out the reaction a secondary alcohol + NAD(+) = a ketone + NADH + H(+). The sequence is that of Alcohol dehydrogenase (ADH) from Malus domestica (Apple).